A 254-amino-acid polypeptide reads, in one-letter code: Winged helix repair factor 1 (254 aa).

The Bipartite nuclear localization signal signature appears at 4 to 21 (KRRLLASEAFGVKRRRAP). Winged helix domain regions lie at residues 32-104 (RAGS…GIVF), 120-179 (PCAG…LAVP), and 180-254 (GAGR…LPDT).

Belongs to the STK19 family. As to quaternary structure, monomer in solution. Homodimer; when bound to DNA. Component of a transcription-coupled nucleotide excision repair (TC-NER) complex composed of STK19, ERCC6, ERCC8, DDA1, DDB1, ELOF1 and UVSSA which assembles and interacts with the multiprotein RNA polymerase II complex when it stalls at DNA lesions.

Its subcellular location is the nucleus. DNA-binding protein which is required for efficient transcription-coupled nucleotide excision repair (TC-NER). Acts as part of a TC-NER complex which assembles and interacts with RNA polymerase II (RNAPII) when it stalls at DNA lesions. TC-NER complex subunit UVSSA binds to the GTF2H1/p62 subunit of the TFIIH transcription factor complex, tethering TFIIH to the TC-NER complex. WHR1/STK19 then interacts with the XPD helicase subunit of TFIIH which guides TFIIH to DNA downstream of the stalled RNAPII, ensuring DNA repair. Directly interacts with RNAPII and also binds to downstream DNA. Promotes the timely removal of DNA damage-stalled RNAPII, allowing downstream NER factors to access DNA lesions. Required for monoubiquitination of UVSSA. Regulates repositioning and stabilization of UVSSA within the TC-NER complex. Stimulates ubiquitination of RNAPII complex member RBP1. Also binds to RNA and regulates the expression levels of many mRNAs. The protein is Winged helix repair factor 1 of Mus musculus (Mouse).